The following is a 65-amino-acid chain: MAVQKSRKTPSKRGMRRSHNALTNPTLSEDQETGEIHLRHHITVDGYYRGKKVIKKTQDIQEINA.

Residues 1 to 19 are compositionally biased toward basic residues; that stretch reads MAVQKSRKTPSKRGMRRSH. The tract at residues 1 to 32 is disordered; it reads MAVQKSRKTPSKRGMRRSHNALTNPTLSEDQE.

It belongs to the bacterial ribosomal protein bL32 family.

In Ruthia magnifica subsp. Calyptogena magnifica, this protein is Large ribosomal subunit protein bL32.